We begin with the raw amino-acid sequence, 471 residues long: SVGFKAGVKEYKLTYYTPEYETKDTDILAAFRVTPQPGVPPEEAGAAVAAESSTGTWTTVWTDGLTSLDRYKGRCYGIEPVPGEEDQYIAYVAYPLDLFEEGSVTNMFTSIVGNVFGFKALRALRLEDLRIPTAYIKTFQGPPHAIQVERDKLNKYGRPLLGCTIKPKLGLSAKNYGRAVYECLRGGLDFTKDDENVNSQPFMRWRDRFLFCAEALYKAQAETGEIKGHYLNATAGTCEEMIKRAVFARELGVPIVMHDYLTGGFTANTSLAHYCRDNGLLLHIHRAMHAVIDRQKNHGMHFRVLAKALRLSGGDHXHAGTVVGKLXGERDITLGFVDLLRDDFIDKDRSRGIYFTQDWVSLPGVLPVRSGGIHVWHMPALTEIFGDDAVLQFGGGTLGHPWGNAPGAVANRVALEACVKARNEGRDLAVEGNEIIREASKWSPELAAACEGWKAIRFNFKAVDTLDKPSS.

Lysine 5 is modified (N6,N6,N6-trimethyllysine). Residues asparagine 114 and threonine 164 each coordinate substrate. The active-site Proton acceptor is lysine 166. Substrate is bound at residue lysine 168. Residues lysine 192, aspartate 194, and glutamate 195 each coordinate Mg(2+). Lysine 192 carries the N6-carboxylysine modification. Histidine 285 serves as the catalytic Proton acceptor. Substrate contacts are provided by arginine 286, histidine 318, and serine 370.

The protein belongs to the RuBisCO large chain family. Type I subfamily. Heterohexadecamer of 8 large chains and 8 small chains; disulfide-linked. The disulfide link is formed within the large subunit homodimers. Requires Mg(2+) as cofactor. In terms of processing, the disulfide bond which can form in the large chain dimeric partners within the hexadecamer appears to be associated with oxidative stress and protein turnover.

Its subcellular location is the plastid. The protein localises to the chloroplast. It carries out the reaction 2 (2R)-3-phosphoglycerate + 2 H(+) = D-ribulose 1,5-bisphosphate + CO2 + H2O. It catalyses the reaction D-ribulose 1,5-bisphosphate + O2 = 2-phosphoglycolate + (2R)-3-phosphoglycerate + 2 H(+). Functionally, ruBisCO catalyzes two reactions: the carboxylation of D-ribulose 1,5-bisphosphate, the primary event in carbon dioxide fixation, as well as the oxidative fragmentation of the pentose substrate in the photorespiration process. Both reactions occur simultaneously and in competition at the same active site. This Chiococca alba (West Indian milkberry) protein is Ribulose bisphosphate carboxylase large chain.